The primary structure comprises 350 residues: GTPase Obg (350 aa).

An Obg domain is found at 1–158; sequence MFIDSVKITL…RLVRLELKLI (158 aa). Residues 159-339 form the OBG-type G domain; sequence ADVGLVGFPN…LKFMLLEEIK (181 aa). GTP contacts are provided by residues 165–172, 190–194, 212–215, 280–283, and 320–322; these read GFPNVGKS, FTTLT, DIPG, SKSD, and SSL. Mg(2+) contacts are provided by Ser-172 and Thr-192.

This sequence belongs to the TRAFAC class OBG-HflX-like GTPase superfamily. OBG GTPase family. As to quaternary structure, monomer. The cofactor is Mg(2+).

Its subcellular location is the cytoplasm. Its function is as follows. An essential GTPase which binds GTP, GDP and possibly (p)ppGpp with moderate affinity, with high nucleotide exchange rates and a fairly low GTP hydrolysis rate. Plays a role in control of the cell cycle, stress response, ribosome biogenesis and in those bacteria that undergo differentiation, in morphogenesis control. In Campylobacter jejuni subsp. jejuni serotype O:2 (strain ATCC 700819 / NCTC 11168), this protein is GTPase Obg.